The chain runs to 67 residues: MDWNRVEGNWKQVKGKVKEQWGKLTDDDLDRIAGKRDQLEGKIQERYGIERDRARRDIDDWYNRQGW.

It belongs to the UPF0337 (CsbD) family.

This Mesorhizobium japonicum (strain LMG 29417 / CECT 9101 / MAFF 303099) (Mesorhizobium loti (strain MAFF 303099)) protein is UPF0337 protein msl9551.